Consider the following 492-residue polypeptide: Vacuolar fusion protein CCZ1 homolog (492 aa).

Residues 255–275 form a disordered region; sequence SVHAGPTSSSSNGTASVERPL. A compositionally biased stretch (polar residues) spans 260 to 269; sequence PTSSSSNGTA.

This sequence belongs to the CCZ1 family. Interacts with MON1.

The protein localises to the endosome. It is found in the prevacuolar compartment. In terms of biological role, plays an important role in membrane trafficking through the secretory apparatus. In complex with MON1, acts as a guanine exchange factor (GEF) for Rab7 protein family. Promotes the exchange of GDP to GTP, converting it from an inactive GDP-bound form into an active GTP-bound form. The active form is involved in protein trafficking from prevacuolar compartments (PVCs) to vacuoles. May serve as a linker between Rab5 and Rab7 protein families in PVCs and mediate PVC maturation. In Oryza sativa subsp. japonica (Rice), this protein is Vacuolar fusion protein CCZ1 homolog.